The sequence spans 451 residues: Uronate isomerase (451 aa).

Belongs to the metallo-dependent hydrolases superfamily. Uronate isomerase family.

The enzyme catalyses D-glucuronate = D-fructuronate. It catalyses the reaction aldehydo-D-galacturonate = keto-D-tagaturonate. Its pathway is carbohydrate metabolism; pentose and glucuronate interconversion. This Thermotoga petrophila (strain ATCC BAA-488 / DSM 13995 / JCM 10881 / RKU-1) protein is Uronate isomerase.